The primary structure comprises 200 residues: Synaptobrevin homolog YKT6 (200 aa).

Residues 7-129 (GVFRSGGEKA…LKMKQLDTYI (123 aa)) enclose the Longin domain. One can recognise a v-SNARE coiled-coil homology domain in the interval 140-200 (AIMKVQQELD…KKSNSCCIIM (61 aa)). Thr-158 is modified (phosphothreonine). Cys-196 is lipidated: S-palmitoyl cysteine. Cys-197 carries the cysteine methyl ester modification. Cys-197 carries the S-farnesyl cysteine lipid modification. The propeptide at 198–200 (IIM) is removed in mature form.

This sequence belongs to the synaptobrevin family.

It is found in the cell membrane. The protein is Synaptobrevin homolog YKT6 (YKT6) of Saccharomyces cerevisiae (strain ATCC 204508 / S288c) (Baker's yeast).